The sequence spans 811 residues: Tail spike protein (811 aa).

2 BNR repeats span residues 150 to 161 (VKSGDDGQTWST) and 286 to 293 (NAGKNWHM). Active-site residues include Glu-371 and Arg-386. The BNR 3 repeat unit spans residues 398-409 (HRSRDIGQTWES). Residue Arg-437 is part of the active site. The Peptidase S74 domain occupies 706 to 808 (SDADHKYGIS…DKLEEMYATN (103 aa)).

It belongs to the glycosyl hydrolase 58 family. In terms of assembly, homotrimer. Interacts with sialic acid. Interacts with adapter protein gp37. Interacts with gp46. Post-translationally, the N-terminus is blocked. Proteolytic cleavage and release of the chaperone in the host cytosol stabilizes the folded protein. The cleavage gives rise to the mature tail spike protein but is not essential for catalytic activity. However, release of the chaperone domain confers kinetic stability and processivity to the endosialidase.

It is found in the virion. It carries out the reaction Endohydrolysis of (2-&gt;8)-alpha-sialosyl linkages in oligo- or poly(sialic) acids.. Receptor binding protein, which mediates the attachment to the host capsule. Degrades the alpha-2,8-linked polysialic acid K1-type capsule by cleaving within the polymer chain of polysialic acid. Its function is as follows. The C-terminal chaperone protein mediates homotrimerization and proper folding of the catalytic endosialidase trimer. The sequence is that of Tail spike protein (GP90) from Escherichia phage K1E (Bacteriophage K1E).